Reading from the N-terminus, the 251-residue chain is Aquaporin TIP1-1 (251 aa).

Met-1 is modified (N-acetylmethionine). Residues 1-23 lie on the Cytoplasmic side of the membrane; the sequence is MPIRNIAIGRPDEATRPDALKAA. A helical transmembrane segment spans residues 24–44; sequence LAEFISTLIFVVAGSGSGMAF. The Vacuolar portion of the chain corresponds to 45-56; that stretch reads NKLTENGATTPS. A helical membrane pass occupies residues 57 to 77; sequence GLVAAAVAHAFGLFVAVSVGA. Residues 78–103 lie on the Cytoplasmic side of the membrane; sequence NISGGHVNPAVTFGAFIGGNITLLRG. An NPA 1 motif is present at residues 85–87; it reads NPA. A helical membrane pass occupies residues 104–124; that stretch reads ILYWIAQLLGSVVACLILKFA. The Vacuolar portion of the chain corresponds to 125–143; sequence TGGLAVPAFGLSAGVGVLN. A helical transmembrane segment spans residues 144 to 164; it reads AFVFEIVMTFGLVYTVYATAI. The Cytoplasmic segment spans residues 165–172; it reads DPKNGSLG. Residues 173-193 traverse the membrane as a helical segment; that stretch reads TIAPIAIGFIVGANILAGGAF. The Vacuolar portion of the chain corresponds to 194-218; sequence SGASMNPAVAFGPAVVSWTWTNHWV. The NPA 2 motif lies at 199–201; it reads NPA. Residues 219–239 form a helical membrane-spanning segment; that stretch reads YWAGPLVGGGIAGLIYEVFFI. Over 240-251 the chain is Cytoplasmic; it reads NTTHEQLPTTDY.

Belongs to the MIP/aquaporin (TC 1.A.8) family. TIP (TC 1.A.8.10) subfamily. As to quaternary structure, interacts with cucumber mosaic virus (CMV) Protein 1a. As to expression, in all the vegetative organs, but not in seeds. Preferentially expressed in roots.

It localises to the vacuole membrane. Functionally, water channel required to facilitate the transport of water, diffusion of amino acids and/or peptides from the vacuolar compartment to the cytoplasm. Does not promote glycerol permeability. May play a role in the control of cell turgor and cell expansion. Its function is impaired by Hg(2+). May be involved in a vesicle-based metabolite routing through or between pre-vacuolar compartments and the central vacuole. Transports urea in yeast cells in a pH-independent manner. Transports H(2)O(2) in yeast cells. The chain is Aquaporin TIP1-1 (TIP1-1) from Arabidopsis thaliana (Mouse-ear cress).